A 502-amino-acid polypeptide reads, in one-letter code: Probable cytosol aminopeptidase 2 (502 aa).

Mn(2+) contacts are provided by K269 and D274. K281 is an active-site residue. D292, D351, and E353 together coordinate Mn(2+). R355 is an active-site residue.

Belongs to the peptidase M17 family. Mn(2+) is required as a cofactor.

The protein localises to the cytoplasm. It catalyses the reaction Release of an N-terminal amino acid, Xaa-|-Yaa-, in which Xaa is preferably Leu, but may be other amino acids including Pro although not Arg or Lys, and Yaa may be Pro. Amino acid amides and methyl esters are also readily hydrolyzed, but rates on arylamides are exceedingly low.. The catalysed reaction is Release of an N-terminal amino acid, preferentially leucine, but not glutamic or aspartic acids.. Its function is as follows. Presumably involved in the processing and regular turnover of intracellular proteins. Catalyzes the removal of unsubstituted N-terminal amino acids from various peptides. The chain is Probable cytosol aminopeptidase 2 (pepA2) from Shewanella oneidensis (strain ATCC 700550 / JCM 31522 / CIP 106686 / LMG 19005 / NCIMB 14063 / MR-1).